Reading from the N-terminus, the 244-residue chain is 1-(5-phosphoribosyl)-5-[(5-phosphoribosylamino)methylideneamino] imidazole-4-carboxamide isomerase (244 aa).

Aspartate 15 (proton acceptor) is an active-site residue. Catalysis depends on aspartate 136, which acts as the Proton donor.

It belongs to the HisA/HisF family.

Its subcellular location is the cytoplasm. The catalysed reaction is 1-(5-phospho-beta-D-ribosyl)-5-[(5-phospho-beta-D-ribosylamino)methylideneamino]imidazole-4-carboxamide = 5-[(5-phospho-1-deoxy-D-ribulos-1-ylimino)methylamino]-1-(5-phospho-beta-D-ribosyl)imidazole-4-carboxamide. It participates in amino-acid biosynthesis; L-histidine biosynthesis; L-histidine from 5-phospho-alpha-D-ribose 1-diphosphate: step 4/9. The sequence is that of 1-(5-phosphoribosyl)-5-[(5-phosphoribosylamino)methylideneamino] imidazole-4-carboxamide isomerase from Dehalococcoides mccartyi (strain CBDB1).